Here is a 238-residue protein sequence, read N- to C-terminus: Ribitol-5-phosphate cytidylyltransferase 1 (238 aa).

Residues L7–G10 and G81–T87 each bind CTP.

This sequence belongs to the IspD/TarI cytidylyltransferase family. TarI subfamily.

It catalyses the reaction D-ribitol 5-phosphate + CTP + H(+) = CDP-L-ribitol + diphosphate. Its pathway is cell wall biogenesis; poly(ribitol phosphate) teichoic acid biosynthesis. Catalyzes the transfer of the cytidylyl group of CTP to D-ribitol 5-phosphate. This is Ribitol-5-phosphate cytidylyltransferase 1 from Staphylococcus aureus (strain USA300).